A 250-amino-acid chain; its full sequence is MNDTRTSRSARFDTTPVVVEDLGLIDYHAAWELQRTIAAERAEGAGSDRLLLLEHPSVYTAGRRTEDADLPIDGSPVVQVDRGGKITWHGPGQLVGYPIVRLAEPVDVVDYVRRLEEALISVCTELGLTVGRVEGRSGVWLPATETLAERKIAAIGIRVQRGVALHGISFNCNSALDGFQAIVPCGIQDAGVTTLTRELGREVTVAEVKPMVATAVVQALNGDLPVRDHDLPRPGTTPAAPNSTRVRSMT.

Positions 44 to 224 (GAGSDRLLLL…AVVQALNGDL (181 aa)) constitute a BPL/LPL catalytic domain. Residues 82–89 (RGGKITWH), 154–156 (AIG), and 167–169 (GIS) each bind substrate. The active-site Acyl-thioester intermediate is the Cys185. Residues 224–250 (LPVRDHDLPRPGTTPAAPNSTRVRSMT) form a disordered region. The segment covering 239–250 (AAPNSTRVRSMT) has biased composition (polar residues).

This sequence belongs to the LipB family.

Its subcellular location is the cytoplasm. It carries out the reaction octanoyl-[ACP] + L-lysyl-[protein] = N(6)-octanoyl-L-lysyl-[protein] + holo-[ACP] + H(+). It functions in the pathway protein modification; protein lipoylation via endogenous pathway; protein N(6)-(lipoyl)lysine from octanoyl-[acyl-carrier-protein]: step 1/2. In terms of biological role, catalyzes the transfer of endogenously produced octanoic acid from octanoyl-acyl-carrier-protein onto the lipoyl domains of lipoate-dependent enzymes. Lipoyl-ACP can also act as a substrate although octanoyl-ACP is likely to be the physiological substrate. This chain is Octanoyltransferase, found in Nocardia farcinica (strain IFM 10152).